The sequence spans 127 residues: Protein ApaG (127 aa).

The 125-residue stretch at 3 to 127 (DTNKYRIEVQ…FVLASPRALH (125 aa)) folds into the ApaG domain.

This chain is Protein ApaG, found in Dechloromonas aromatica (strain RCB).